We begin with the raw amino-acid sequence, 398 residues long: 1-deoxy-D-xylulose 5-phosphate reductoisomerase (398 aa).

T11, G12, S13, I14, and N125 together coordinate NADPH. K126 is a binding site for 1-deoxy-D-xylulose 5-phosphate. E127 contributes to the NADPH binding site. Residue D151 coordinates Mn(2+). Residues S152, E153, S186, and H209 each contribute to the 1-deoxy-D-xylulose 5-phosphate site. E153 provides a ligand contact to Mn(2+). Residue G215 coordinates NADPH. 1-deoxy-D-xylulose 5-phosphate-binding residues include S222, N227, K228, and E231. Residue E231 participates in Mn(2+) binding.

It belongs to the DXR family. It depends on Mg(2+) as a cofactor. Requires Mn(2+) as cofactor.

The enzyme catalyses 2-C-methyl-D-erythritol 4-phosphate + NADP(+) = 1-deoxy-D-xylulose 5-phosphate + NADPH + H(+). It participates in isoprenoid biosynthesis; isopentenyl diphosphate biosynthesis via DXP pathway; isopentenyl diphosphate from 1-deoxy-D-xylulose 5-phosphate: step 1/6. Functionally, catalyzes the NADPH-dependent rearrangement and reduction of 1-deoxy-D-xylulose-5-phosphate (DXP) to 2-C-methyl-D-erythritol 4-phosphate (MEP). This is 1-deoxy-D-xylulose 5-phosphate reductoisomerase from Acinetobacter baylyi (strain ATCC 33305 / BD413 / ADP1).